Here is a 240-residue protein sequence, read N- to C-terminus: Biosynthetic peptidoglycan transglycosylase (240 aa).

Residues 9–31 form a helical membrane-spanning segment; the sequence is FLNVVKWFAIASVLLVLLFRVVP.

Belongs to the glycosyltransferase 51 family.

It localises to the cell inner membrane. The catalysed reaction is [GlcNAc-(1-&gt;4)-Mur2Ac(oyl-L-Ala-gamma-D-Glu-L-Lys-D-Ala-D-Ala)](n)-di-trans,octa-cis-undecaprenyl diphosphate + beta-D-GlcNAc-(1-&gt;4)-Mur2Ac(oyl-L-Ala-gamma-D-Glu-L-Lys-D-Ala-D-Ala)-di-trans,octa-cis-undecaprenyl diphosphate = [GlcNAc-(1-&gt;4)-Mur2Ac(oyl-L-Ala-gamma-D-Glu-L-Lys-D-Ala-D-Ala)](n+1)-di-trans,octa-cis-undecaprenyl diphosphate + di-trans,octa-cis-undecaprenyl diphosphate + H(+). It participates in cell wall biogenesis; peptidoglycan biosynthesis. Peptidoglycan polymerase that catalyzes glycan chain elongation from lipid-linked precursors. This chain is Biosynthetic peptidoglycan transglycosylase, found in Pseudomonas fluorescens (strain SBW25).